Consider the following 116-residue polypeptide: U3-theraphotoxin-Lsp1a (116 aa).

Positions 1-17 (MKLSTFIIMISLAVALA) are cleaved as a signal peptide. The propeptide occupies 18–50 (TWPSEHIEGSDSETKLNVELGPYALADRAEKGK).

The protein belongs to the neurotoxin 25 family. F7 subfamily. Contains 3 disulfide bonds. As to expression, expressed by the venom gland.

The protein resides in the secreted. The polypeptide is U3-theraphotoxin-Lsp1a (Lasiodora sp. (strain IBSP 8539) (Brazilian salmon pink birdeater)).